Here is a 300-residue protein sequence, read N- to C-terminus: Ribosome-inactivating protein 3 (300 aa).

The active site involves E207.

This sequence belongs to the ribosome-inactivating protein family. Type 1 RIP subfamily. In terms of assembly, monomer. As to expression, accumulates to high levels in seeds.

It is found in the cytoplasm. The catalysed reaction is Endohydrolysis of the N-glycosidic bond at one specific adenosine on the 28S rRNA.. Possesses features of some constitutive defense agent. The coordinate Opaque-2-controlled synthesis of this protein and the major seed storage proteins (zeins) may provide the germinating seedling with both nutritional benefits and protection against pathogen invasion of the surrounding endosperm. In Zea mays (Maize), this protein is Ribosome-inactivating protein 3 (CRIP3).